We begin with the raw amino-acid sequence, 429 residues long: Glutamate-1-semialdehyde 2,1-aminomutase (429 aa).

At Lys-267 the chain carries N6-(pyridoxal phosphate)lysine.

The protein belongs to the class-III pyridoxal-phosphate-dependent aminotransferase family. HemL subfamily. As to quaternary structure, homodimer. Pyridoxal 5'-phosphate serves as cofactor.

It is found in the cytoplasm. The catalysed reaction is (S)-4-amino-5-oxopentanoate = 5-aminolevulinate. Its pathway is porphyrin-containing compound metabolism; protoporphyrin-IX biosynthesis; 5-aminolevulinate from L-glutamyl-tRNA(Glu): step 2/2. The chain is Glutamate-1-semialdehyde 2,1-aminomutase from Xanthomonas oryzae pv. oryzae (strain PXO99A).